The following is a 399-amino-acid chain: Protein HYM1 (399 aa).

Over residues 363–382 (VSNNNASSSNVASITSPSSV) the composition is skewed to low complexity. Residues 363–399 (VSNNNASSSNVASITSPSSVMNNQSSILTHSTSPDSR) form a disordered region. The segment covering 383-399 (MNNQSSILTHSTSPDSR) has biased composition (polar residues).

The protein belongs to the Mo25 family.

This is Protein HYM1 (HYM1) from Saccharomyces cerevisiae (strain ATCC 204508 / S288c) (Baker's yeast).